Here is a 220-residue protein sequence, read N- to C-terminus: dTTP/UTP pyrophosphatase (220 aa).

Asp83 acts as the Proton acceptor in catalysis.

This sequence belongs to the Maf family. YhdE subfamily. The cofactor is a divalent metal cation.

The protein localises to the cytoplasm. The enzyme catalyses dTTP + H2O = dTMP + diphosphate + H(+). It catalyses the reaction UTP + H2O = UMP + diphosphate + H(+). In terms of biological role, nucleoside triphosphate pyrophosphatase that hydrolyzes dTTP and UTP. May have a dual role in cell division arrest and in preventing the incorporation of modified nucleotides into cellular nucleic acids. This is dTTP/UTP pyrophosphatase from Syntrophotalea carbinolica (strain DSM 2380 / NBRC 103641 / GraBd1) (Pelobacter carbinolicus).